A 183-amino-acid polypeptide reads, in one-letter code: Capsid protein (183 aa).

Positions 136-183 (NAPILSTLPETTVVRRRGRSPRRRTPSPRRRRSQSPRRRRSQSRESQC) are disordered. The span at 149 to 176 (VRRRGRSPRRRTPSPRRRRSQSPRRRRS) shows a compositional bias: basic residues. 3 positions are modified to phosphoserine; by host: serine 155, serine 162, and serine 170. The stretch at 155–161 (SPRRRTP) is one 1; half-length repeat. The segment at 155–177 (SPRRRTPSPRRRRSQSPRRRRSQ) is 3 X 8 AA repeats of S-P-R-R-R-[PR]-S-Q. The short motif at 158–175 (RRTPSPRRRRSQSPRRRR) is the Bipartite nuclear localization signal element. Tandem repeats lie at residues 162-169 (SPRRRRSQ) and 170-177 (SPRRRRSQ). The interval 177–183 (QSRESQC) is RNA binding.

Belongs to the orthohepadnavirus core antigen family. Homodimerizes, then multimerizes. Interacts with cytosol exposed regions of viral L glycoprotein present in the reticulum-to-Golgi compartment. Interacts with human FLNB. Phosphorylated form interacts with host importin alpha; this interaction depends on the exposure of the NLS, which itself depends upon genome maturation and/or phosphorylation of the capsid protein. Interacts with host NUP153. Phosphorylated by host SRPK1, SRPK2, and maybe protein kinase C or GAPDH. Phosphorylation is critical for pregenomic RNA packaging. Protein kinase C phosphorylation is stimulated by HBx protein and may play a role in transport of the viral genome to the nucleus at the late step during the viral replication cycle.

The protein resides in the virion. Its subcellular location is the host cytoplasm. Functionally, self assembles to form an icosahedral capsid. Most capsids appear to be large particles with an icosahedral symmetry of T=4 and consist of 240 copies of capsid protein, though a fraction forms smaller T=3 particles consisting of 180 capsid proteins. Entering capsids are transported along microtubules to the nucleus. Phosphorylation of the capsid is thought to induce exposure of nuclear localization signal in the C-terminal portion of the capsid protein that allows binding to the nuclear pore complex via the importin (karyopherin-) alpha and beta. Capsids are imported in intact form through the nuclear pore into the nuclear basket, where it probably binds NUP153. Only capsids that contain the mature viral genome can release the viral DNA and capsid protein into the nucleoplasm. Immature capsids get stuck in the basket. Capsids encapsulate the pre-genomic RNA and the P protein. Pre-genomic RNA is reverse-transcribed into DNA while the capsid is still in the cytoplasm. The capsid can then either be directed to the nucleus, providing more genomes for transcription, or bud through the endoplasmic reticulum to provide new virions. This is Capsid protein from Hepatitis B virus genotype D subtype ayw (isolate Italy/CI/1992) (HBV-D).